Reading from the N-terminus, the 444-residue chain is Na(+)/H(+) antiporter NhaA 2 (444 aa).

The next 11 membrane-spanning stretches (helical) occupy residues 21–41 (FSGI…NSPF), 64–84 (FSIH…MVGL), 102–122 (AFPV…YYVL), 131–151 (GFGI…LLLG), 160–180 (VFLV…IAVF), 185–205 (EGLH…LTGI), 212–232 (HLGV…HSGI), 307–327 (ALQP…NAGV), 342–362 (LGVI…LTFL), 377–397 (WSHI…SMFV), and 413–433 (IAIL…LIIN).

The protein belongs to the NhaA Na(+)/H(+) (TC 2.A.33) antiporter family.

It localises to the cell inner membrane. It catalyses the reaction Na(+)(in) + 2 H(+)(out) = Na(+)(out) + 2 H(+)(in). Functionally, na(+)/H(+) antiporter that extrudes sodium in exchange for external protons. This chain is Na(+)/H(+) antiporter NhaA 2, found in Helicobacter hepaticus (strain ATCC 51449 / 3B1).